The following is a 429-amino-acid chain: Enolase (429 aa).

Residue Gln162 participates in (2R)-2-phosphoglycerate binding. Glu204 functions as the Proton donor in the catalytic mechanism. Asp241, Glu282, and Asp309 together coordinate Mg(2+). Residues Lys334, Arg363, Ser364, and Lys385 each coordinate (2R)-2-phosphoglycerate. The active-site Proton acceptor is Lys334.

Belongs to the enolase family. It depends on Mg(2+) as a cofactor.

It localises to the cytoplasm. The protein localises to the secreted. It is found in the cell surface. It carries out the reaction (2R)-2-phosphoglycerate = phosphoenolpyruvate + H2O. The protein operates within carbohydrate degradation; glycolysis; pyruvate from D-glyceraldehyde 3-phosphate: step 4/5. Functionally, catalyzes the reversible conversion of 2-phosphoglycerate (2-PG) into phosphoenolpyruvate (PEP). It is essential for the degradation of carbohydrates via glycolysis. This is Enolase from Acidothermus cellulolyticus (strain ATCC 43068 / DSM 8971 / 11B).